Here is a 384-residue protein sequence, read N- to C-terminus: Carbamoyl phosphate synthase small chain (384 aa).

The segment at 1–193 (MTKPATTPAI…DSHPEIPASE (193 aa)) is CPSase. L-glutamine-binding residues include S51, G245, and G247. The Glutamine amidotransferase type-1 domain occupies 197 to 384 (HVVAYDYGVK…ISAMAPVVDR (188 aa)). The Nucleophile role is filled by C273. The L-glutamine site is built by L274, Q277, N315, G317, and F318. Active-site residues include H357 and E359.

The protein belongs to the CarA family. Composed of two chains; the small (or glutamine) chain promotes the hydrolysis of glutamine to ammonia, which is used by the large (or ammonia) chain to synthesize carbamoyl phosphate. Tetramer of heterodimers (alpha,beta)4.

It catalyses the reaction hydrogencarbonate + L-glutamine + 2 ATP + H2O = carbamoyl phosphate + L-glutamate + 2 ADP + phosphate + 2 H(+). The enzyme catalyses L-glutamine + H2O = L-glutamate + NH4(+). Its pathway is amino-acid biosynthesis; L-arginine biosynthesis; carbamoyl phosphate from bicarbonate: step 1/1. The protein operates within pyrimidine metabolism; UMP biosynthesis via de novo pathway; (S)-dihydroorotate from bicarbonate: step 1/3. In terms of biological role, small subunit of the glutamine-dependent carbamoyl phosphate synthetase (CPSase). CPSase catalyzes the formation of carbamoyl phosphate from the ammonia moiety of glutamine, carbonate, and phosphate donated by ATP, constituting the first step of 2 biosynthetic pathways, one leading to arginine and/or urea and the other to pyrimidine nucleotides. The small subunit (glutamine amidotransferase) binds and cleaves glutamine to supply the large subunit with the substrate ammonia. In Stutzerimonas stutzeri (Pseudomonas stutzeri), this protein is Carbamoyl phosphate synthase small chain.